We begin with the raw amino-acid sequence, 357 residues long: D-alanine--D-alanine ligase A (357 aa).

In terms of domain architecture, ATP-grasp spans 143 to 348; sequence KRLLREAGLA…YSKVIDVLIE (206 aa). 171-226 lines the ATP pocket; that stretch reads AGALGLPFFAKPARQGSSFGVSKVHDRDGFEQAVETALRYDSKALIEEFVDGREIE. 3 residues coordinate Mg(2+): aspartate 302, glutamate 315, and asparagine 317.

It belongs to the D-alanine--D-alanine ligase family. The cofactor is Mg(2+). Mn(2+) is required as a cofactor.

It localises to the cytoplasm. It catalyses the reaction 2 D-alanine + ATP = D-alanyl-D-alanine + ADP + phosphate + H(+). The protein operates within cell wall biogenesis; peptidoglycan biosynthesis. Its function is as follows. Cell wall formation. The protein is D-alanine--D-alanine ligase A of Mesorhizobium japonicum (strain LMG 29417 / CECT 9101 / MAFF 303099) (Mesorhizobium loti (strain MAFF 303099)).